Reading from the N-terminus, the 402-residue chain is Flavohemoprotein (402 aa).

In terms of domain architecture, Globin spans 1–136; that stretch reads MLSAKTIEIV…IADAFISIEA (136 aa). Position 85 (His85) interacts with heme b. Residues Tyr95 and Glu135 each act as charge relay system in the active site. The tract at residues 147-402 is reductase; that stretch reads GGWKDFRNFV…EFFGPATSLQ (256 aa). Residues 150–260 form the FAD-binding FR-type domain; it reads KDFRNFVIVK…SAPAGDFVLN (111 aa). Residues Tyr188 and 204–207 contribute to the FAD site; that span reads RQYS. 273-278 provides a ligand contact to NADP(+); sequence GVGITP. Residue 394–397 participates in FAD binding; sequence FFGP.

Belongs to the globin family. Two-domain flavohemoproteins subfamily. The protein in the C-terminal section; belongs to the flavoprotein pyridine nucleotide cytochrome reductase family. It depends on heme b as a cofactor. The cofactor is FAD.

The enzyme catalyses 2 nitric oxide + NADPH + 2 O2 = 2 nitrate + NADP(+) + H(+). It carries out the reaction 2 nitric oxide + NADH + 2 O2 = 2 nitrate + NAD(+) + H(+). Functionally, is involved in NO detoxification in an aerobic process, termed nitric oxide dioxygenase (NOD) reaction that utilizes O(2) and NAD(P)H to convert NO to nitrate, which protects the bacterium from various noxious nitrogen compounds. Therefore, plays a central role in the inducible response to nitrosative stress. The protein is Flavohemoprotein of Bacillus cereus (strain ATCC 14579 / DSM 31 / CCUG 7414 / JCM 2152 / NBRC 15305 / NCIMB 9373 / NCTC 2599 / NRRL B-3711).